A 430-amino-acid polypeptide reads, in one-letter code: Tol-Pal system protein TolB (430 aa).

An N-terminal signal peptide occupies residues 1 to 21; sequence MKQALRVAFGFLILWASVLHA.

It belongs to the TolB family. In terms of assembly, the Tol-Pal system is composed of five core proteins: the inner membrane proteins TolA, TolQ and TolR, the periplasmic protein TolB and the outer membrane protein Pal. They form a network linking the inner and outer membranes and the peptidoglycan layer.

The protein resides in the periplasm. Part of the Tol-Pal system, which plays a role in outer membrane invagination during cell division and is important for maintaining outer membrane integrity. TolB occupies a key intermediary position in the Tol-Pal system because it communicates directly with both membrane-embedded components, Pal in the outer membrane and TolA in the inner membrane. The sequence is that of Tol-Pal system protein TolB from Escherichia coli O8 (strain IAI1).